The chain runs to 373 residues: MSEKKINLLDLDRKALRALFTEMGEKPFRADQLMKWIYHFGVSDFEEMTNINKVLRAKLAAKCEIVAPEISSYQKSVDGTIKFAINVGDGQEVETVYIPEDDRATLCVSSQVGCALECTFCSTAQQGFNRNLTVAEIVGQIWRVADFIGFVKDTGERPITNVVMMGMGEPLLNLKNVIPAMDIMLDDFGFSLSKRRVTLSTSGVVPALDKLGDVLDVALAVSIHAPNDELRDVLVPVNKKYPLEEFLGGIRRYIAKSNANRGRVTVEYVMLDHINDSTDQAHELAKLMKDTPCKVNLIPFNPYPGSPYGRSSNSRIDRFSKVLMEYGLTVIVRKTRGDDIDAACGQLAGDIRDRTKRLAKKQMQQNQISVTIN.

E94 (proton acceptor) is an active-site residue. The 240-residue stretch at 100-339 folds into the Radical SAM core domain; that stretch reads EDDRATLCVS…VIVRKTRGDD (240 aa). Cysteines 107 and 344 form a disulfide. Positions 114, 118, and 121 each coordinate [4Fe-4S] cluster. S-adenosyl-L-methionine is bound by residues 168 to 169, S200, 222 to 224, and N301; these read GE and SIH. Catalysis depends on C344, which acts as the S-methylcysteine intermediate.

This sequence belongs to the radical SAM superfamily. RlmN family. [4Fe-4S] cluster serves as cofactor.

Its subcellular location is the cytoplasm. The catalysed reaction is adenosine(2503) in 23S rRNA + 2 reduced [2Fe-2S]-[ferredoxin] + 2 S-adenosyl-L-methionine = 2-methyladenosine(2503) in 23S rRNA + 5'-deoxyadenosine + L-methionine + 2 oxidized [2Fe-2S]-[ferredoxin] + S-adenosyl-L-homocysteine. It carries out the reaction adenosine(37) in tRNA + 2 reduced [2Fe-2S]-[ferredoxin] + 2 S-adenosyl-L-methionine = 2-methyladenosine(37) in tRNA + 5'-deoxyadenosine + L-methionine + 2 oxidized [2Fe-2S]-[ferredoxin] + S-adenosyl-L-homocysteine. Specifically methylates position 2 of adenine 2503 in 23S rRNA and position 2 of adenine 37 in tRNAs. m2A2503 modification seems to play a crucial role in the proofreading step occurring at the peptidyl transferase center and thus would serve to optimize ribosomal fidelity. In Shewanella pealeana (strain ATCC 700345 / ANG-SQ1), this protein is Dual-specificity RNA methyltransferase RlmN.